The primary structure comprises 119 residues: Protein yippee-like 3 (119 aa).

In terms of domain architecture, Yippee spans 19 to 116 (RRYSCAHCRA…IELNHMIKDN (98 aa)). Cys23, Cys26, Cys79, and Cys82 together coordinate Zn(2+).

It belongs to the yippee family. Probably ubiquitinated leading to its degradation by the proteasome.

It localises to the nucleus. The protein localises to the nucleolus. Involved in proliferation and apoptosis in myeloid precursor cells. The sequence is that of Protein yippee-like 3 (YPEL3) from Bos taurus (Bovine).